We begin with the raw amino-acid sequence, 334 residues long: Nucleoid-associated protein YPK_2796 (334 aa).

It belongs to the YejK family.

The protein resides in the cytoplasm. Its subcellular location is the nucleoid. The polypeptide is Nucleoid-associated protein YPK_2796 (Yersinia pseudotuberculosis serotype O:3 (strain YPIII)).